The following is a 1551-amino-acid chain: Transient receptor potential cation channel subfamily M member-like 2 (1551 aa).

Residues 1-714 are Cytoplasmic-facing; the sequence is MGKDSFTPLY…WMGTMAMNTR (714 aa). The stretch at 715–730 is an intramembrane region; that stretch reads WWKVLVCLYLPVLIFP. Residues 731–837 lie on the Cytoplasmic side of the membrane; that stretch reads IIYFVPDEQH…DRIMHFYSAP (107 aa). A disordered region spans residues 744–767; it reads AAEREHQKSLNQKSSKVKSHKEKN. The helical transmembrane segment at 838–858 threads the bilayer; it reads FSKFVGNVVGYLAFIFLYAYV. Residues 859–877 lie on the Extracellular side of the membrane; the sequence is VLFNFPRFDPAKTLGGIHP. Residues 878 to 898 traverse the membrane as a helical segment; sequence TEIVLYFWVFTILIEEIRQLA. Ca(2+) is bound by residues E893 and Q896. The Cytoplasmic portion of the chain corresponds to 899–916; that stretch reads AKPPKYIKDKVSVYFSDT. Residues 917-937 form a helical membrane-spanning segment; the sequence is WNFVDIFSLTVFIIAIILRFF. Ca(2+)-binding residues include N918 and D921. Over 938-947 the chain is Extracellular; that stretch reads TNSRIFTASR. The helical transmembrane segment at 948-968 threads the bilayer; sequence IILSLDIIFFIVRSLQIFSVN. The Cytoplasmic segment spans residues 969–980; that stretch reads RLLGPKLVMIQK. Residues 981–1001 traverse the membrane as a helical segment; it reads MMQDLAQFIIILAVFTIAYGI. Over 1002–1018 the chain is Extracellular; that stretch reads ALHAVMFPSPGIYARNN. N-linked (GlcNAc...) asparagine glycosylation is present at N1017. An intramembrane region (pore-forming) is located at residues 1019-1034; it reads TWVTITSVVQYPYWQM. The short motif at 1035–1037 is the Selectivity filter element; sequence YGE. The Extracellular portion of the chain corresponds to 1035 to 1059; the sequence is YGELFLDEIQGEKPKEFGEVDPDGR. The Prevents fast channel inactivation signature appears at 1040–1042; sequence LDE. Residues 1060-1080 traverse the membrane as a helical segment; that stretch reads WLSPLLLAIYMVFTNILLLNL. Residues 1081–1116 lie on the Cytoplasmic side of the membrane; it reads LIAIFNYTFERVQEDSDKVWKFQRYDLVQEYHSRPV. The stretch at 1117 to 1135 is an intramembrane region; it reads FAPPLVLLGHILIFIRWVW. Over 1136 to 1551 the chain is Cytoplasmic; the sequence is RMCRCGHPPR…KVAKMRDAAF (416 aa). The stretch at 1184 to 1209 forms a coiled coil; the sequence is LEERVRALGDRVDCINSQLNRVLDSM. Positions 1394–1546 constitute a Nudix hydrolase domain; it reads WKRTSAGVML…VSILEKVAKM (153 aa). The Nudix box motif lies at 1428–1449; sequence GMVEPGQLVTQALKAEFGEEAM.

This sequence belongs to the transient receptor (TC 1.A.4) family. LTrpC subfamily. TRPM2 sub-subfamily. In terms of assembly, homotetramer.

It localises to the cell membrane. Activated by phosphatidylinositol 4,5-bisphosphate (PIP2). Although PIP2 is essential for the channel activation, its contribution to the level of channel activity is minimal. Also activated by diphosphate ribose-2'-phosphate. Upon binding to ADPR, channel activation requires only a short initial cytosolic Ca(2+) increase, then the activation is sustained by the uptake of extracellular Ca(2+). Activated by 2-aminoethyl diphenylborinate (2-APB) in a Ca(2+)-dependent manner. 2-APB prevents the inactivation of the channel. Its function is as follows. Nonselective, voltage-independent cation channel that mediates Ca(2+) and to a lesser extent Na(+) influx, leading to increased cytoplasmic Ca(2+) levels. Functions as a ligand-gated ion channel. Binding of ADP-ribose causes a conformation change; the channel is primed but still requires Ca(2+) binding to trigger channel opening. May have ADP-ribose pyrophosphatase activity which reduces ADP-ribose levels induced by oxidative stress, thus preventing the channel activation by reactive oxygen species. The sequence is that of Transient receptor potential cation channel subfamily M member-like 2 from Nematostella vectensis (Starlet sea anemone).